A 113-amino-acid chain; its full sequence is U11-theraphotoxin-Hhn1a (113 aa).

Positions 1 to 21 (MNTVRVAFLLVFVLAVSLGQA) are cleaved as a signal peptide. Positions 22 to 74 (DKDENRMEMQEKTEQGKSYLDFAENLLLQKLEEPEAKLLEEDSEESRNSRQKR) are excised as a propeptide. Positions 58 to 69 (KLLEEDSEESRN) are enriched in basic and acidic residues. Residues 58 to 83 (KLLEEDSEESRNSRQKRCIGEGVPCD) are disordered. 3 disulfides stabilise this stretch: C75–C90, C82–C95, and C89–C110.

Belongs to the neurotoxin 14 (magi-1) family. 01 (HNTX-16) subfamily. In terms of tissue distribution, expressed by the venom gland.

The protein localises to the secreted. Its function is as follows. Probable ion channel inhibitor. The polypeptide is U11-theraphotoxin-Hhn1a (Cyriopagopus hainanus (Chinese bird spider)).